A 625-amino-acid polypeptide reads, in one-letter code: Archaeosine synthase subunit alpha (625 aa).

The PUA domain occupies 556–624 (KYVVKIDDFV…VAVDVRHVKK (69 aa)).

The protein belongs to the archaeosine synthase type 1 family. In terms of assembly, forms a robust complex with the archaeosine synthase beta subunit RaSEA. Formation of this complex highly increases lysine transfer activity. The complex likely consists of an alpha(2)beta(2) heterotetrameric structure.

The catalysed reaction is 7-cyano-7-carbaguanosine(15) in tRNA + L-lysine = 7-N-[(5S)-5-amino-5-carboxypentyl]formamidino-7-deazaguanosine(15) in tRNA. Its pathway is tRNA modification; archaeosine-tRNA biosynthesis. In terms of biological role, functions in the biosynthesis of archaeosine, a modified nucleoside present in the dihydrouridine loop (D-loop) of archaeal tRNAs. Catalyzes the addition of L-lysine to the cyano group of 7-cyano-7-deazaguanine (preQ0)-modified tRNAs at position 15, to generate q0kN15-tRNA, a q0N lysine adduct identified as 7-N-[(5S)-5-amino-5-carboxypentyl]formamidino-7-deazaguanosine. The chain is Archaeosine synthase subunit alpha from Methanosarcina acetivorans (strain ATCC 35395 / DSM 2834 / JCM 12185 / C2A).